Consider the following 1742-residue polypeptide: Kinase non-catalytic C-lobe domain-containing protein 1 (1742 aa).

The KIND 1 domain maps to 37–217 (VSLADILSLR…QELSENTWRG (181 aa)). Disordered regions lie at residues 215 to 288 (WRGR…EGLA) and 365 to 455 (FKTQ…TEQS). The residue at position 267 (Ser267) is a Phosphoserine. A compositionally biased stretch (polar residues) spans 403–412 (LEASSPSQGS). The segment covering 426–445 (DSDHEGHIPRSEEKIPEESR) has biased composition (basic and acidic residues). One can recognise a KIND 2 domain in the interval 456 to 620 (LSLKDLLSKL…RASTCKVHPE (165 aa)). 4 disordered regions span residues 703–727 (DQLA…REGT), 744–876 (SNQL…KMTA), 948–1006 (GPAS…LSDI), and 1028–1076 (VTRE…ASDF). Residues 711–727 (SNEKPKEGSGHLDREGT) show a composition bias toward basic and acidic residues. Over residues 755 to 771 (GATPDPDGDSGSPSSAT) the composition is skewed to low complexity. Residues 782–791 (VTQQKGTSGT) show a composition bias toward polar residues. Residues 847 to 861 (SDGHPEKPRPADRKL) show a composition bias toward basic and acidic residues. Low complexity predominate over residues 949–965 (PASPSESTSEEPGSQPE). Residue Ser951 is modified to Phosphoserine. Residues 1043 to 1053 (GPSQDSTSHAS) show a composition bias toward polar residues. The stretch at 1112–1177 (HTELEAQSPE…EMKSKVQFLS (66 aa)) forms a coiled coil. An N-terminal Ras-GEF domain is found at 1239-1367 (KARILQAGTP…ALLEVGTERR (129 aa)). One can recognise a Ras-GEF domain in the interval 1461 to 1712 (STNQLFTQLT…SGADVSILAA (252 aa)).

Interacts (via KIND2) with MAP2; the interaction enhances MAP2 phosphorylation and localizes KNDC1 to dendrites. As to expression, highly expressed in the brain and at low levels in the ovary. In the brain it is most prominently expressed in the cerebellum where it is restricted to the granular Purkinje cell layer.

It is found in the cell projection. Its subcellular location is the dendrite. The protein resides in the perikaryon. In terms of biological role, RAS-Guanine nucleotide exchange factor (GEF) that controls the negative regulation of neuronal dendrite growth by mediating a signaling pathway linking RAS and MAP2. May be involved in cellular senescence. The chain is Kinase non-catalytic C-lobe domain-containing protein 1 from Mus musculus (Mouse).